A 199-amino-acid chain; its full sequence is Putative pseudouridine methyltransferase (199 aa).

S-adenosyl-L-methionine-binding residues include Met132 and Cys186.

It belongs to the methyltransferase superfamily. TrmY family.

The protein resides in the cytoplasm. This is Putative pseudouridine methyltransferase from Vibrio atlanticus (strain LGP32) (Vibrio splendidus (strain Mel32)).